The following is a 570-amino-acid chain: Trans-cinnamate:CoA ligase, peroxisomal (570 aa).

A Microbody targeting signal motif is present at residues 568–570 (ARL).

The protein belongs to the ATP-dependent AMP-binding enzyme family. As to quaternary structure, monomer. Requires K(+) as cofactor. As to expression, mostly expressed in flower organs, with highest levels in corollas and petal limbs, and, to a lesser extent, in petal tubes, sepals, pistils, stamen, stigma, anthers and ovaries. Also present at low levels in leaves, stems and roots.

The protein resides in the peroxisome. It carries out the reaction (E)-4-coumarate + ATP + CoA = (E)-4-coumaroyl-CoA + AMP + diphosphate. The catalysed reaction is (E)-caffeate + ATP + CoA = (E)-caffeoyl-CoA + AMP + diphosphate. The enzyme catalyses (E)-cinnamate + ATP + CoA = (E)-cinnamoyl-CoA + AMP + diphosphate. It functions in the pathway phenylpropanoid metabolism; trans-cinnamate biosynthesis. The protein operates within phytoalexin biosynthesis; 3,4',5-trihydroxystilbene biosynthesis; 3,4',5-trihydroxystilbene from trans-4-coumarate: step 1/2. Its function is as follows. Involved in the biosynthesis of floral volatile benzenoid/phenylpropanoid (FVBP) scent (e.g. benzylbenzoate, phenylethylbenzoate, and methylbenzoate). Catalyzes the formation of CoA esters of cinnamic acid, and, with lower efficiency, of 4-coumaric acid and caffeic acid. The chain is Trans-cinnamate:CoA ligase, peroxisomal from Petunia hybrida (Petunia).